The following is a 537-amino-acid chain: Tyrosine-protein kinase Fyn (537 aa).

A lipid anchor (N-myristoyl glycine) is attached at G2. Residues C3 and C6 are each lipidated (S-palmitoyl cysteine). T12 is subject to Phosphothreonine; by PKC. A disordered region spans residues 14–35; that stretch reads LTEERDGSLNQSSGYRYGTDPT. 2 positions are modified to phosphoserine: S21 and S26. Residues 82–143 enclose the SH3 domain; sequence TGVTLFVALY…PSNYVAPVDS (62 aa). Positions 149 to 246 constitute an SH2 domain; sequence WYFGKLGRKD…GLCCRLVVPC (98 aa). At Y185 the chain carries Phosphotyrosine. One can recognise a Protein kinase domain in the interval 271 to 524; the sequence is LQLIKRLGNG…YLQGFLEDYF (254 aa). ATP-binding positions include 277-285 and K299; that span reads LGNGQFGEV. D390 acts as the Proton acceptor in catalysis. Residue Y420 is modified to Phosphotyrosine; by autocatalysis. The residue at position 531 (Y531) is a Phosphotyrosine; by CSK.

It belongs to the protein kinase superfamily. Tyr protein kinase family. SRC subfamily. As to quaternary structure, interacts (via its SH3 domain) with PIK3R1 and PRMT8. Interacts with FYB1, PAG1, and SH2D1A. Interacts with CD79A (tyrosine-phosphorylated form); the interaction increases FYN activity. Interacts (via SH2 domain) with CSF1R (tyrosine phosphorylated). Interacts with TOM1L1 (phosphorylated form). Interacts with KDR (tyrosine phosphorylated). Interacts (via SH3 domain) with KLHL2 (via N-terminus). Interacts with SH2D1A and SLAMF1. Interacts with ITCH; the interaction phosphorylates ITCH and negatively regulates its activity. Interacts with FASLG. Interacts with RUNX3. Interacts with KIT. Interacts with EPHA8; possible downstream effector of EPHA8 in regulation of cell adhesion. Interacts with PTK2/FAK1; this interaction leads to PTK2/FAK1 phosphorylation and activation. Interacts with CAV1; this interaction couples integrins to the Ras-ERK pathway. Interacts with UNC119. Interacts (via SH2 domain) with PTPRH (phosphorylated form). Interacts with PTPRO (phosphorylated form). Interacts with PTPRB (phosphorylated form). Interacts with FYB2. Interacts with DSCAM. Interacts with SKAP1 and FYB1; this interaction promotes the phosphorylation of CLNK. Interacts with NEDD9; in the presence of PTK2. Requires Mn(2+) as cofactor. Post-translationally, autophosphorylated at Tyr-420. Phosphorylation on the C-terminal tail at Tyr-531 by CSK maintains the enzyme in an inactive state. PTPRC/CD45 dephosphorylates Tyr-531 leading to activation. Ultraviolet B (UVB) strongly increase phosphorylation at Thr-12 and kinase activity, and promotes translocation from the cytoplasm to the nucleus. Dephosphorylation at Tyr-420 by PTPN2 negatively regulates T-cell receptor signaling. Phosphorylated at tyrosine residues, which can be enhanced by NTN1. In terms of processing, palmitoylated. Palmitoylation at Cys-3 and Cys-6, probably by ZDHHC21, regulates subcellular location.

The protein localises to the cytoplasm. Its subcellular location is the nucleus. It localises to the cell membrane. It is found in the perikaryon. The catalysed reaction is L-tyrosyl-[protein] + ATP = O-phospho-L-tyrosyl-[protein] + ADP + H(+). Inhibited by phosphorylation of Tyr-531 by leukocyte common antigen and activated by dephosphorylation of this site. Its function is as follows. Non-receptor tyrosine-protein kinase that plays a role in many biological processes including regulation of cell growth and survival, cell adhesion, integrin-mediated signaling, cytoskeletal remodeling, cell motility, immune response and axon guidance. Inactive FYN is phosphorylated on its C-terminal tail within the catalytic domain. Following activation by PKA, the protein subsequently associates with PTK2/FAK1, allowing PTK2/FAK1 phosphorylation, activation and targeting to focal adhesions. Involved in the regulation of cell adhesion and motility through phosphorylation of CTNNB1 (beta-catenin) and CTNND1 (delta-catenin). Regulates cytoskeletal remodeling by phosphorylating several proteins including the actin regulator WAS and the microtubule-associated proteins MAP2 and MAPT. Promotes cell survival by phosphorylating AGAP2/PIKE-A and preventing its apoptotic cleavage. Participates in signal transduction pathways that regulate the integrity of the glomerular slit diaphragm (an essential part of the glomerular filter of the kidney) by phosphorylating several slit diaphragm components including NPHS1, KIRREL1 and TRPC6. Plays a role in neural processes by phosphorylating DPYSL2, a multifunctional adapter protein within the central nervous system, ARHGAP32, a regulator for Rho family GTPases implicated in various neural functions, and SNCA, a small pre-synaptic protein. Involved in reelin signaling by mediating phosphorylation of DAB1 following reelin (RELN)-binding to its receptor. Participates in the downstream signaling pathways that lead to T-cell differentiation and proliferation following T-cell receptor (TCR) stimulation. Phosphorylates PTK2B/PYK2 in response to T-cell receptor activation. Also participates in negative feedback regulation of TCR signaling through phosphorylation of PAG1, thereby promoting interaction between PAG1 and CSK and recruitment of CSK to lipid rafts. CSK maintains LCK and FYN in an inactive form. Promotes CD28-induced phosphorylation of VAV1. In mast cells, phosphorylates CLNK after activation of immunoglobulin epsilon receptor signaling. Can also promote CD244-mediated NK cell activation. This Bos taurus (Bovine) protein is Tyrosine-protein kinase Fyn.